Here is a 349-residue protein sequence, read N- to C-terminus: Anthranilate phosphoribosyltransferase (349 aa).

5-phospho-alpha-D-ribose 1-diphosphate is bound by residues G82, 85–86, 92–95, 110–118, and S122; these read GD, NVST, and KHGNRAVSG. G82 lines the anthranilate pocket. S94 is a Mg(2+) binding site. N113 provides a ligand contact to anthranilate. Residue R168 coordinates anthranilate. Mg(2+) is bound by residues D227 and E228.

The protein belongs to the anthranilate phosphoribosyltransferase family. In terms of assembly, homodimer. It depends on Mg(2+) as a cofactor.

The enzyme catalyses N-(5-phospho-beta-D-ribosyl)anthranilate + diphosphate = 5-phospho-alpha-D-ribose 1-diphosphate + anthranilate. It participates in amino-acid biosynthesis; L-tryptophan biosynthesis; L-tryptophan from chorismate: step 2/5. In terms of biological role, catalyzes the transfer of the phosphoribosyl group of 5-phosphorylribose-1-pyrophosphate (PRPP) to anthranilate to yield N-(5'-phosphoribosyl)-anthranilate (PRA). In Pseudomonas savastanoi pv. phaseolicola (strain 1448A / Race 6) (Pseudomonas syringae pv. phaseolicola (strain 1448A / Race 6)), this protein is Anthranilate phosphoribosyltransferase.